A 190-amino-acid polypeptide reads, in one-letter code: Small ribosomal subunit protein mS23 (190 aa).

Ala2 is subject to N-acetylalanine. Lys102 bears the N6-acetyllysine mark. Positions Arg139–Pro190 are disordered. A compositionally biased stretch (basic and acidic residues) spans Glu166–Ala179.

This sequence belongs to the mitochondrion-specific ribosomal protein mS23 family. In terms of assembly, component of the mitochondrial small ribosomal subunit (mt-SSU). Mature mammalian 55S mitochondrial ribosomes consist of a small (28S) and a large (39S) subunit. The 28S small subunit contains a 12S ribosomal RNA (12S mt-rRNA) and 30 different proteins. The 39S large subunit contains a 16S rRNA (16S mt-rRNA), a copy of mitochondrial valine transfer RNA (mt-tRNA(Val)), which plays an integral structural role, and 52 different proteins.

It localises to the mitochondrion. The protein is Small ribosomal subunit protein mS23 (MRPS23) of Homo sapiens (Human).